The sequence spans 1651 residues: Alsin (1651 aa).

3 RCC1 repeats span residues 59–108 (DGEV…AVTE), 109–167 (SGVV…ALSI), and 169–218 (REIW…ALVQ). Residues 444-476 (REEQVKQESLQGKKSSSLMDIREEESEGGSRRL) form a disordered region. Polar residues predominate over residues 450–461 (QESLQGKKSSSL). 4 positions are modified to phosphoserine: Ser-459, Ser-460, Ser-477, and Ser-486. Thr-504 carries the post-translational modification Phosphothreonine. 2 RCC1 repeats span residues 519–570 (RTEV…ALTA) and 572–621 (SQVY…FLVD). At Lys-527 the chain carries N6-acetyllysine. A DH domain is found at 684-879 (GYIASLHELA…ESLALHLGKK (196 aa)). The region spanning 895–1001 (GKMTDSLRKP…RAISQAVDQA (107 aa)) is the PH domain. MORN repeat units lie at residues 1043–1065 (YDGR…DGKV), 1066–1088 (YSGT…NKAL), 1094–1116 (YVGH…SGEV), 1117–1139 (FEGC…KLTS), 1145–1167 (FIGQ…TRGE), 1169–1191 (YMGM…FGLY), 1192–1214 (YEGN…DDTI), and 1215–1238 (YEGE…NGDY). Ser-1329 bears the Phosphoserine mark. One can recognise a VPS9 domain in the interval 1507–1651 (KQPDIALLGF…YYQIQREKLN (145 aa)).

As to quaternary structure, forms a heteromeric complex with ALS2CL. Interacts with ALS2CL.

Functionally, may act as a GTPase regulator. Controls survival and growth of spinal motoneurons. In Rattus norvegicus (Rat), this protein is Alsin (Als2).